The following is a 495-amino-acid chain: UDP-N-acetylmuramoyl-L-alanyl-D-glutamate--2,6-diaminopimelate ligase (495 aa).

Residues Leu-27, Ser-29, and 44–46 (HQT) contribute to the UDP-N-acetyl-alpha-D-muramoyl-L-alanyl-D-glutamate site. 116–122 (GTNGKTT) contacts ATP. UDP-N-acetyl-alpha-D-muramoyl-L-alanyl-D-glutamate is bound by residues Asn-157, 158-159 (TT), Ser-185, Gln-191, and Arg-193. Position 225 is an N6-carboxylysine (Lys-225). Meso-2,6-diaminopimelate contacts are provided by residues Arg-390, 414 to 417 (DNPR), Gly-465, and Glu-469. A Meso-diaminopimelate recognition motif motif is present at residues 414 to 417 (DNPR).

Belongs to the MurCDEF family. MurE subfamily. Requires Mg(2+) as cofactor. In terms of processing, carboxylation is probably crucial for Mg(2+) binding and, consequently, for the gamma-phosphate positioning of ATP.

The protein localises to the cytoplasm. It carries out the reaction UDP-N-acetyl-alpha-D-muramoyl-L-alanyl-D-glutamate + meso-2,6-diaminopimelate + ATP = UDP-N-acetyl-alpha-D-muramoyl-L-alanyl-gamma-D-glutamyl-meso-2,6-diaminopimelate + ADP + phosphate + H(+). Its pathway is cell wall biogenesis; peptidoglycan biosynthesis. Its function is as follows. Catalyzes the addition of meso-diaminopimelic acid to the nucleotide precursor UDP-N-acetylmuramoyl-L-alanyl-D-glutamate (UMAG) in the biosynthesis of bacterial cell-wall peptidoglycan. The protein is UDP-N-acetylmuramoyl-L-alanyl-D-glutamate--2,6-diaminopimelate ligase of Sodalis glossinidius (strain morsitans).